Consider the following 261-residue polypeptide: General secretion pathway protein N (261 aa).

The Cytoplasmic portion of the chain corresponds to 1–10 (MRLEMIGLRT). A helical membrane pass occupies residues 11-31 (WLLATVVGWALLVCVLAVAGL). At 32-261 (GKRVELLPDD…QGGSTPGQTQ (230 aa)) the chain is on the periplasmic side. The segment at 158 to 261 (VFNGQGGQPP…QGGSTPGQTQ (104 aa)) is disordered. Residues 179 to 200 (AVPPLPPNVPPAPATPAPPPAE) show a composition bias toward pro residues. Over residues 201–211 (VPQQQPGGQAP) the composition is skewed to low complexity. Residues 227–244 (RPSDEQMRAIRERIEARR) are compositionally biased toward basic and acidic residues.

As to quaternary structure, binds to XpsD.

The protein resides in the cell inner membrane. Its function is as follows. Involved in a general secretion pathway (GSP) for the export of proteins. In Xanthomonas campestris pv. campestris (strain ATCC 33913 / DSM 3586 / NCPPB 528 / LMG 568 / P 25), this protein is General secretion pathway protein N (xpsN).